We begin with the raw amino-acid sequence, 450 residues long: tRNA modification GTPase MnmE (450 aa).

Residues Arg-25, Glu-86, and Arg-126 each contribute to the (6S)-5-formyl-5,6,7,8-tetrahydrofolate site. The TrmE-type G domain occupies Gly-221–Gly-373. Asn-231 provides a ligand contact to K(+). Residues Asn-231–Ser-236, Thr-250–Thr-256, Asp-275–Gly-278, and Asn-336–Asp-339 contribute to the GTP site. Ser-235 contributes to the Mg(2+) binding site. Thr-250, Leu-252, and Thr-255 together coordinate K(+). Thr-256 provides a ligand contact to Mg(2+). Lys-450 provides a ligand contact to (6S)-5-formyl-5,6,7,8-tetrahydrofolate.

Belongs to the TRAFAC class TrmE-Era-EngA-EngB-Septin-like GTPase superfamily. TrmE GTPase family. Homodimer. Heterotetramer of two MnmE and two MnmG subunits. Requires K(+) as cofactor.

The protein localises to the cytoplasm. In terms of biological role, exhibits a very high intrinsic GTPase hydrolysis rate. Involved in the addition of a carboxymethylaminomethyl (cmnm) group at the wobble position (U34) of certain tRNAs, forming tRNA-cmnm(5)s(2)U34. The protein is tRNA modification GTPase MnmE of Synechococcus sp. (strain CC9605).